The following is a 642-amino-acid chain: uncharacterized protein (642 aa).

Mg(2+)-binding residues include Glu15 and Asp118. The PINc domain maps to 29-149 (VCVDTCVVID…YNLAKAQGIE (121 aa)). Residues 510 to 578 (DNSIDLIVPE…ELESTRIYET (69 aa)) enclose the KH domain.

It in the N-terminal section; belongs to the PINc/VapC protein family. Mg(2+) serves as cofactor.

This is an uncharacterized protein from Methanocaldococcus jannaschii (strain ATCC 43067 / DSM 2661 / JAL-1 / JCM 10045 / NBRC 100440) (Methanococcus jannaschii).